Here is a 211-residue protein sequence, read N- to C-terminus: Thiamine-phosphate synthase (211 aa).

4-amino-2-methyl-5-(diphosphooxymethyl)pyrimidine is bound by residues 37–41 and Asn69; that span reads QLRIK. Asp70 and Asp89 together coordinate Mg(2+). Ser108 provides a ligand contact to 4-amino-2-methyl-5-(diphosphooxymethyl)pyrimidine. Residue 134 to 136 coordinates 2-[(2R,5Z)-2-carboxy-4-methylthiazol-5(2H)-ylidene]ethyl phosphate; it reads TQT. Lys137 is a binding site for 4-amino-2-methyl-5-(diphosphooxymethyl)pyrimidine. Residues Gly166 and 186–187 each bind 2-[(2R,5Z)-2-carboxy-4-methylthiazol-5(2H)-ylidene]ethyl phosphate; that span reads VS.

Belongs to the thiamine-phosphate synthase family. It depends on Mg(2+) as a cofactor.

It carries out the reaction 2-[(2R,5Z)-2-carboxy-4-methylthiazol-5(2H)-ylidene]ethyl phosphate + 4-amino-2-methyl-5-(diphosphooxymethyl)pyrimidine + 2 H(+) = thiamine phosphate + CO2 + diphosphate. It catalyses the reaction 2-(2-carboxy-4-methylthiazol-5-yl)ethyl phosphate + 4-amino-2-methyl-5-(diphosphooxymethyl)pyrimidine + 2 H(+) = thiamine phosphate + CO2 + diphosphate. The catalysed reaction is 4-methyl-5-(2-phosphooxyethyl)-thiazole + 4-amino-2-methyl-5-(diphosphooxymethyl)pyrimidine + H(+) = thiamine phosphate + diphosphate. It functions in the pathway cofactor biosynthesis; thiamine diphosphate biosynthesis; thiamine phosphate from 4-amino-2-methyl-5-diphosphomethylpyrimidine and 4-methyl-5-(2-phosphoethyl)-thiazole: step 1/1. Condenses 4-methyl-5-(beta-hydroxyethyl)thiazole monophosphate (THZ-P) and 2-methyl-4-amino-5-hydroxymethyl pyrimidine pyrophosphate (HMP-PP) to form thiamine monophosphate (TMP). The protein is Thiamine-phosphate synthase of Shigella dysenteriae serotype 1 (strain Sd197).